We begin with the raw amino-acid sequence, 506 residues long: 2-isopropylmalate synthase (506 aa).

Residues 4 to 266 (ILFMDTTLRD…EPSITLKEIK (263 aa)) form the Pyruvate carboxyltransferase domain. Mn(2+) is bound by residues aspartate 13, histidine 201, histidine 203, and asparagine 237. A regulatory domain region spans residues 390-506 (NITQLQVHFV…KLKSFIQLVK (117 aa)).

It belongs to the alpha-IPM synthase/homocitrate synthase family. LeuA type 1 subfamily. Homodimer. It depends on Mn(2+) as a cofactor.

The protein resides in the cytoplasm. It carries out the reaction 3-methyl-2-oxobutanoate + acetyl-CoA + H2O = (2S)-2-isopropylmalate + CoA + H(+). It participates in amino-acid biosynthesis; L-leucine biosynthesis; L-leucine from 3-methyl-2-oxobutanoate: step 1/4. Catalyzes the condensation of the acetyl group of acetyl-CoA with 3-methyl-2-oxobutanoate (2-ketoisovalerate) to form 3-carboxy-3-hydroxy-4-methylpentanoate (2-isopropylmalate). The polypeptide is 2-isopropylmalate synthase (Bacillus thuringiensis subsp. konkukian (strain 97-27)).